A 335-amino-acid chain; its full sequence is Protease HtpX homolog (335 aa).

Transmembrane regions (helical) follow at residues 9–29 (VYMM…STIA), 42–62 (LFTS…AIIY), and 64–84 (ILAY…LLII). A Zn(2+)-binding site is contributed by H168. Residue E169 is part of the active site. H172 is a Zn(2+) binding site. The next 2 helical transmembrane spans lie at 179-199 (AVML…YALL) and 213-233 (AAIG…VLAF). E238 provides a ligand contact to Zn(2+).

It belongs to the peptidase M48B family. Requires Zn(2+) as cofactor.

The protein localises to the cell membrane. The polypeptide is Protease HtpX homolog (Archaeoglobus fulgidus (strain ATCC 49558 / DSM 4304 / JCM 9628 / NBRC 100126 / VC-16)).